We begin with the raw amino-acid sequence, 360 residues long: Epoxyqueuosine reductase (360 aa).

The Proton donor role is filled by aspartate 142. The 4Fe-4S ferredoxin-type domain maps to 187–216 (APTEPVTAHCGSCQACMDVCPTQAIVAPHR). [4Fe-4S] cluster is bound by residues cysteine 196, cysteine 199, cysteine 202, cysteine 206, cysteine 222, cysteine 249, cysteine 252, and cysteine 256.

The protein belongs to the QueG family. As to quaternary structure, monomer. Cob(II)alamin serves as cofactor. The cofactor is [4Fe-4S] cluster.

The protein resides in the cytoplasm. The catalysed reaction is epoxyqueuosine(34) in tRNA + AH2 = queuosine(34) in tRNA + A + H2O. The protein operates within tRNA modification; tRNA-queuosine biosynthesis. Its function is as follows. Catalyzes the conversion of epoxyqueuosine (oQ) to queuosine (Q), which is a hypermodified base found in the wobble positions of tRNA(Asp), tRNA(Asn), tRNA(His) and tRNA(Tyr). This chain is Epoxyqueuosine reductase, found in Alicycliphilus denitrificans (strain DSM 14773 / CIP 107495 / K601).